The sequence spans 196 residues: dTTP/UTP pyrophosphatase (196 aa).

Aspartate 72 functions as the Proton acceptor in the catalytic mechanism.

This sequence belongs to the Maf family. YhdE subfamily. Requires a divalent metal cation as cofactor.

The protein resides in the cytoplasm. It carries out the reaction dTTP + H2O = dTMP + diphosphate + H(+). The catalysed reaction is UTP + H2O = UMP + diphosphate + H(+). Nucleoside triphosphate pyrophosphatase that hydrolyzes dTTP and UTP. May have a dual role in cell division arrest and in preventing the incorporation of modified nucleotides into cellular nucleic acids. The polypeptide is dTTP/UTP pyrophosphatase (Chlamydia trachomatis serovar A (strain ATCC VR-571B / DSM 19440 / HAR-13)).